A 318-amino-acid chain; its full sequence is NADH-ubiquinone oxidoreductase chain 1 (318 aa).

8 helical membrane passes run 2–22, 69–89, 98–118, 140–160, 171–191, 222–242, 253–273, and 285–305; these read FMAN…FLTL, MLYL…WTPL, FNLG…SILW, ISYE…SGSF, HSWL…STLA, LFFM…TTIF, ETYS…FLWI, and LMHL…MWYI.

Belongs to the complex I subunit 1 family. Core subunit of respiratory chain NADH dehydrogenase (Complex I) which is composed of 45 different subunits.

The protein localises to the mitochondrion inner membrane. It carries out the reaction a ubiquinone + NADH + 5 H(+)(in) = a ubiquinol + NAD(+) + 4 H(+)(out). In terms of biological role, core subunit of the mitochondrial membrane respiratory chain NADH dehydrogenase (Complex I) which catalyzes electron transfer from NADH through the respiratory chain, using ubiquinone as an electron acceptor. Essential for the catalytic activity and assembly of complex I. The protein is NADH-ubiquinone oxidoreductase chain 1 (MT-ND1) of Saguinus leucopus (Silvery-brown bare-face tamarin).